Here is a 209-residue protein sequence, read N- to C-terminus: MNNNLKSRGIMLVMSSPSGGGKTTISQLLVNELQGEIIRSVSVTTREPRNEEVEGKDYFFVTEDEFHHLCNTNQMLEYAKVFGNYYGIPRRFVMDNINNGISILFSIDWQGAFKLIDIMSEHVVSVFILPPSMEELKRRLYNRSGESDMINQRLKEAAFEISHCYRYNYIIVNHNIEESVQQIKSIFIAEKLKTHRKMFLEQVVKSYYI.

Residues 9 to 188 enclose the Guanylate kinase-like domain; it reads GIMLVMSSPS…SVQQIKSIFI (180 aa). ATP is bound at residue 16–23; sequence SPSGGGKT.

Belongs to the guanylate kinase family.

The protein localises to the cytoplasm. It carries out the reaction GMP + ATP = GDP + ADP. Essential for recycling GMP and indirectly, cGMP. The polypeptide is Guanylate kinase (Ehrlichia ruminantium (strain Gardel)).